The primary structure comprises 287 residues: 2-dehydro-3-deoxyphosphooctonate aldolase (287 aa).

Belongs to the KdsA family.

The protein resides in the cytoplasm. It catalyses the reaction D-arabinose 5-phosphate + phosphoenolpyruvate + H2O = 3-deoxy-alpha-D-manno-2-octulosonate-8-phosphate + phosphate. It functions in the pathway carbohydrate biosynthesis; 3-deoxy-D-manno-octulosonate biosynthesis; 3-deoxy-D-manno-octulosonate from D-ribulose 5-phosphate: step 2/3. The protein operates within bacterial outer membrane biogenesis; lipopolysaccharide biosynthesis. In Nitrobacter hamburgensis (strain DSM 10229 / NCIMB 13809 / X14), this protein is 2-dehydro-3-deoxyphosphooctonate aldolase.